The sequence spans 163 residues: Nucleotide-binding protein Bcer98_0876 (163 aa).

It belongs to the YajQ family.

Functionally, nucleotide-binding protein. The chain is Nucleotide-binding protein Bcer98_0876 from Bacillus cytotoxicus (strain DSM 22905 / CIP 110041 / 391-98 / NVH 391-98).